Here is a 205-residue protein sequence, read N- to C-terminus: Holliday junction branch migration complex subunit RuvA (205 aa).

The domain I stretch occupies residues 1-63; that stretch reads MIGMLRGHVE…QDAITLFGFG (63 aa). The segment at 64-142 is domain II; sequence TLASKRMFLQ…LSQIEGSSAT (79 aa). Residues 143–145 are flexible linker; it reads AST. The domain III stretch occupies residues 146–205; that stretch reads PEDTGAEQVVEGLMSLGWHQQDAAHAVQTVCADNQIETPLNAKDVPRVLKLALTSLDRGR.

It belongs to the RuvA family. In terms of assembly, homotetramer. Forms an RuvA(8)-RuvB(12)-Holliday junction (HJ) complex. HJ DNA is sandwiched between 2 RuvA tetramers; dsDNA enters through RuvA and exits via RuvB. An RuvB hexamer assembles on each DNA strand where it exits the tetramer. Each RuvB hexamer is contacted by two RuvA subunits (via domain III) on 2 adjacent RuvB subunits; this complex drives branch migration. In the full resolvosome a probable DNA-RuvA(4)-RuvB(12)-RuvC(2) complex forms which resolves the HJ.

The protein localises to the cytoplasm. Its function is as follows. The RuvA-RuvB-RuvC complex processes Holliday junction (HJ) DNA during genetic recombination and DNA repair, while the RuvA-RuvB complex plays an important role in the rescue of blocked DNA replication forks via replication fork reversal (RFR). RuvA specifically binds to HJ cruciform DNA, conferring on it an open structure. The RuvB hexamer acts as an ATP-dependent pump, pulling dsDNA into and through the RuvAB complex. HJ branch migration allows RuvC to scan DNA until it finds its consensus sequence, where it cleaves and resolves the cruciform DNA. The polypeptide is Holliday junction branch migration complex subunit RuvA (Bifidobacterium adolescentis (strain ATCC 15703 / DSM 20083 / NCTC 11814 / E194a)).